Here is a 1827-residue protein sequence, read N- to C-terminus: Sucrase-isomaltase, intestinal (1827 aa).

The Cytoplasmic segment spans residues 2–12 (AKRKFSGLEIT). Position 7 is a phosphoserine; by PKA (serine 7). A helical; Signal-anchor for type II membrane protein transmembrane segment spans residues 13–32 (LIVLFVIVFIIAIALIAVLA). Residues 33–1827 (TKTPAVEEVN…LDDPIEISWS (1795 aa)) lie on the Lumenal side of the membrane. Residues 39–64 (EEVNPSSSTPTTTSTTTSTSGSVSCP) are disordered. A compositionally biased stretch (low complexity) spans 43–64 (PSSSTPTTTSTTTSTSGSVSCP). A P-type 1 domain is found at 61–110 (VSCPSELNEVVNERINCIPEQSPTQAICAQRNCCWRPWNNSDIPWCFFVD). Intrachain disulfides connect cysteine 63–cysteine 94, cysteine 77–cysteine 93, and cysteine 88–cysteine 106. Asparagine 99 carries an N-linked (GlcNAc...) asparagine glycan. Residues 110–1007 (DNHGYNVEGM…DLQLNPTRTR (898 aa)) form an isomaltase region. Residues aspartate 264 and aspartate 388 each coordinate substrate. Residues tyrosine 391 and tyrosine 400 each carry the sulfotyrosine modification. Asparagine 455 is a glycosylation site (N-linked (GlcNAc...) asparagine). Catalysis depends on aspartate 505, which acts as the Nucleophile; for isomaltase activity. A disulfide bridge links cysteine 520 with cysteine 545. Substrate is bound at residue arginine 588. The active-site For isomaltase activity is aspartate 604. Cysteines 635 and 646 form a disulfide. Histidine 662 contributes to the substrate binding site. Asparagine 859, asparagine 896, and asparagine 904 each carry an N-linked (GlcNAc...) asparagine glycan. Residues 932–978 (DQTFLESEKITCYPDADIATQEKCTQRGCIWDTNTVNPRAPECYFPK) form the P-type 2 domain. The sucrase stretch occupies residues 1008-1827 (ITLPSEPITN…LDDPIEISWS (820 aa)). Asparagine 1235, asparagine 1303, asparagine 1325, asparagine 1340, asparagine 1354, and asparagine 1368 each carry an N-linked (GlcNAc...) asparagine glycan. Tyrosine 1382 and tyrosine 1385 each carry sulfotyrosine. Residue aspartate 1394 is the Nucleophile; for sucrase activity of the active site. The active-site For sucrase activity is the glutamate 1397. An N-linked (GlcNAc...) asparagine glycan is attached at asparagine 1403. The active-site Proton donor; for sucrase activity is aspartate 1500. Asparagine 1535, asparagine 1572, asparagine 1748, asparagine 1763, and asparagine 1799 each carry an N-linked (GlcNAc...) asparagine glycan.

Belongs to the glycosyl hydrolase 31 family. As to quaternary structure, the resulting sucrase and isomaltase subunits stay associated with one another in a complex by non-covalent linkages. The precursor is proteolytically cleaved when exposed to pancreatic proteases in the intestinal lumen. Post-translationally, N- and O-glycosylated. In terms of processing, sulfated.

It localises to the apical cell membrane. The catalysed reaction is Hydrolysis of sucrose and maltose by an alpha-D-glucosidase-type action.. The enzyme catalyses Hydrolysis of (1-&gt;6)-alpha-D-glucosidic linkages in some oligosaccharides produced from starch and glycogen by alpha-amylase, and in isomaltose.. In terms of biological role, plays an important role in the final stage of carbohydrate digestion. Isomaltase activity is specific for both alpha-1,4- and alpha-1,6-oligosaccharides. In Oryctolagus cuniculus (Rabbit), this protein is Sucrase-isomaltase, intestinal (SI).